A 105-amino-acid chain; its full sequence is Protein U4 (105 aa).

Residues 5-25 form a helical membrane-spanning segment; that stretch reads FLLFLLLLVLVINPSLVVNMV.

This sequence belongs to the nanovirus U4 protein family.

The protein localises to the membrane. This is Protein U4 (DNA-U4) from Faba bean necrotic yellows virus (isolate Egyptian EV1-93) (FBNYV).